Here is a 188-residue protein sequence, read N- to C-terminus: dCTP deaminase (188 aa).

Residues 111-116 (KSTYAR), 135-137 (TLE), glutamine 156, tyrosine 170, and glutamine 180 each bind dCTP. Glutamate 137 functions as the Proton donor/acceptor in the catalytic mechanism.

It belongs to the dCTP deaminase family. In terms of assembly, homotrimer.

It carries out the reaction dCTP + H2O + H(+) = dUTP + NH4(+). It participates in pyrimidine metabolism; dUMP biosynthesis; dUMP from dCTP (dUTP route): step 1/2. In terms of biological role, catalyzes the deamination of dCTP to dUTP. This is dCTP deaminase from Neisseria meningitidis serogroup C / serotype 2a (strain ATCC 700532 / DSM 15464 / FAM18).